Reading from the N-terminus, the 356-residue chain is S-adenosylmethionine:tRNA ribosyltransferase-isomerase (356 aa).

The protein belongs to the QueA family. As to quaternary structure, monomer.

The protein resides in the cytoplasm. The catalysed reaction is 7-aminomethyl-7-carbaguanosine(34) in tRNA + S-adenosyl-L-methionine = epoxyqueuosine(34) in tRNA + adenine + L-methionine + 2 H(+). Its pathway is tRNA modification; tRNA-queuosine biosynthesis. Transfers and isomerizes the ribose moiety from AdoMet to the 7-aminomethyl group of 7-deazaguanine (preQ1-tRNA) to give epoxyqueuosine (oQ-tRNA). The sequence is that of S-adenosylmethionine:tRNA ribosyltransferase-isomerase from Xanthomonas axonopodis pv. citri (strain 306).